The sequence spans 114 residues: Ig heavy chain V-A2 region BS-1 (114 aa).

Gln1 is modified (pyrrolidone carboxylic acid). One can recognise an Ig-like domain in the interval 1–107; sequence QSVKESEGGL…YLGLMDVWGP (107 aa).

The polypeptide is Ig heavy chain V-A2 region BS-1 (Oryctolagus cuniculus (Rabbit)).